The following is a 292-amino-acid chain: Elongation factor Ts (292 aa).

Residues 79-82 (TDFV) form an involved in Mg(2+) ion dislocation from EF-Tu region.

This sequence belongs to the EF-Ts family.

It is found in the cytoplasm. Functionally, associates with the EF-Tu.GDP complex and induces the exchange of GDP to GTP. It remains bound to the aminoacyl-tRNA.EF-Tu.GTP complex up to the GTP hydrolysis stage on the ribosome. This Mycoplasmoides gallisepticum (strain R(low / passage 15 / clone 2)) (Mycoplasma gallisepticum) protein is Elongation factor Ts.